Reading from the N-terminus, the 751-residue chain is Cytosolic neutral trehalase (751 aa).

A compositionally biased stretch (polar residues) spans 1–15 (MDDSALPSNTSNGIN). Disordered stretches follow at residues 1-42 (MDDS…NPES) and 64-88 (DFHE…NPRK). Positions 64-78 (DFHEMLGDRNTRRGS) are enriched in basic and acidic residues. Residues Asp-105, Asp-107, Asn-109, Gln-111, and Asp-116 each coordinate Ca(2+). Substrate-binding positions include Arg-292, 299–300 (WD), Asn-336, 345–347 (RSQ), Glu-412, Arg-461, and Gly-464. Residues Asp-466 and Glu-670 each act as proton donor/acceptor in the active site.

The protein belongs to the glycosyl hydrolase 37 family. Ca(2+) is required as a cofactor.

It localises to the cytoplasm. The catalysed reaction is alpha,alpha-trehalose + H2O = alpha-D-glucose + beta-D-glucose. It functions in the pathway carbohydrate degradation. Activated by calcium. In terms of biological role, hydrolyzes intracellular trehalose to glucose. The disaccharide trehalose serves as a storage carbohydrate that is mobilized during conidial germination. Regulates the level of trehalose as a protectant for cell integrity during heat stress. This chain is Cytosolic neutral trehalase, found in Emericella nidulans (strain FGSC A4 / ATCC 38163 / CBS 112.46 / NRRL 194 / M139) (Aspergillus nidulans).